Here is an 89-residue protein sequence, read N- to C-terminus: Small ribosomal subunit protein uS14 (89 aa).

This sequence belongs to the universal ribosomal protein uS14 family. As to quaternary structure, part of the 30S ribosomal subunit. Contacts proteins S3 and S10.

Its function is as follows. Binds 16S rRNA, required for the assembly of 30S particles and may also be responsible for determining the conformation of the 16S rRNA at the A site. In Aster yellows witches'-broom phytoplasma (strain AYWB), this protein is Small ribosomal subunit protein uS14.